A 585-amino-acid polypeptide reads, in one-letter code: Auxin response factor 17 (585 aa).

Positions 119-221 form a DNA-binding region, TF-B3; sequence FAKILTPSDA…EMFIGVRRTP (103 aa). 2 disordered regions span residues 483 to 517 and 535 to 585; these read EMMNFGSPPSDNLSPNSNTTNLSSGNDLVGNRGPL and EHSE…SSQG. A compositionally biased stretch (low complexity) spans 488 to 510; that stretch reads GSPPSDNLSPNSNTTNLSSGNDL. Residues 573-585 are compositionally biased toward polar residues; that stretch reads KHSNSNAGSSSQG.

Belongs to the ARF family. As to quaternary structure, homo and heterodimers.

The protein resides in the nucleus. Its function is as follows. Auxin response factors (ARFs) are transcriptional factors that bind specifically to the DNA sequence 5'-TGTCTC-3' found in the auxin-responsive promoter elements (AuxREs). Could act as transcriptional activator or repressor. Formation of heterodimers with Aux/IAA proteins may alter their ability to modulate early auxin response genes expression. The protein is Auxin response factor 17 (ARF17) of Arabidopsis thaliana (Mouse-ear cress).